We begin with the raw amino-acid sequence, 452 residues long: Probable ECA polymerase (452 aa).

A run of 11 helical transmembrane segments spans residues 6-26 (FSGL…LTWF), 37-57 (VFFS…TSVL), 63-83 (VGVA…CFYG), 118-138 (VILM…NGFL), 155-175 (GVAL…VYFL), 181-201 (AWLF…MIVG), 207-227 (IIIA…ISLW), 228-248 (MLAA…LKRY), 341-361 (LVVM…GLII), 378-398 (YKAA…IVLA), and 410-430 (VFFL…FWLF).

The protein belongs to the WzyE family. Probably part of a complex composed of WzxE, WzyE and WzzE.

The protein localises to the cell inner membrane. It participates in bacterial outer membrane biogenesis; enterobacterial common antigen biosynthesis. Functionally, probably involved in the polymerization of enterobacterial common antigen (ECA) trisaccharide repeat units. This chain is Probable ECA polymerase, found in Salmonella typhi.